Here is a 340-residue protein sequence, read N- to C-terminus: Glycerol-3-phosphate dehydrogenase [NAD(P)+] (340 aa).

Residues Ser-14, Phe-15, Arg-35, and Lys-108 each coordinate NADPH. Positions 108 and 136 each coordinate sn-glycerol 3-phosphate. Ala-140 contacts NADPH. Residues Lys-191, Asp-244, Ser-254, Arg-255, and Asn-256 each coordinate sn-glycerol 3-phosphate. The active-site Proton acceptor is Lys-191. Arg-255 contacts NADPH. Glu-281 lines the NADPH pocket.

Belongs to the NAD-dependent glycerol-3-phosphate dehydrogenase family.

The protein localises to the cytoplasm. It catalyses the reaction sn-glycerol 3-phosphate + NAD(+) = dihydroxyacetone phosphate + NADH + H(+). The catalysed reaction is sn-glycerol 3-phosphate + NADP(+) = dihydroxyacetone phosphate + NADPH + H(+). Its pathway is membrane lipid metabolism; glycerophospholipid metabolism. In terms of biological role, catalyzes the reduction of the glycolytic intermediate dihydroxyacetone phosphate (DHAP) to sn-glycerol 3-phosphate (G3P), the key precursor for phospholipid synthesis. The protein is Glycerol-3-phosphate dehydrogenase [NAD(P)+] of Pseudomonas paraeruginosa (strain DSM 24068 / PA7) (Pseudomonas aeruginosa (strain PA7)).